Consider the following 509-residue polypeptide: Heat shock 70 kDa protein 14 (509 aa).

Belongs to the heat shock protein 70 family. As to quaternary structure, component of ribosome-associated complex (RAC), a heterodimer composed of Hsp70/DnaK-type chaperone HSPA14 and Hsp40/DnaJ-type chaperone DNAJC2.

The protein resides in the cytoplasm. The protein localises to the cytosol. Component of the ribosome-associated complex (RAC), a complex involved in folding or maintaining nascent polypeptides in a folding-competent state. In the RAC complex, binds to the nascent polypeptide chain, while DNAJC2 stimulates its ATPase activity. The protein is Heat shock 70 kDa protein 14 (HSPA14) of Homo sapiens (Human).